The primary structure comprises 509 residues: 2-succinyl-5-enolpyruvyl-6-hydroxy-3-cyclohexene-1-carboxylate synthase (509 aa).

Belongs to the TPP enzyme family. MenD subfamily. In terms of assembly, homodimer. Requires Mg(2+) as cofactor. Mn(2+) is required as a cofactor. The cofactor is thiamine diphosphate.

It catalyses the reaction isochorismate + 2-oxoglutarate + H(+) = 5-enolpyruvoyl-6-hydroxy-2-succinyl-cyclohex-3-ene-1-carboxylate + CO2. Its pathway is quinol/quinone metabolism; 1,4-dihydroxy-2-naphthoate biosynthesis; 1,4-dihydroxy-2-naphthoate from chorismate: step 2/7. It functions in the pathway quinol/quinone metabolism; menaquinone biosynthesis. Its function is as follows. Catalyzes the thiamine diphosphate-dependent decarboxylation of 2-oxoglutarate and the subsequent addition of the resulting succinic semialdehyde-thiamine pyrophosphate anion to isochorismate to yield 2-succinyl-5-enolpyruvyl-6-hydroxy-3-cyclohexene-1-carboxylate (SEPHCHC). The protein is 2-succinyl-5-enolpyruvyl-6-hydroxy-3-cyclohexene-1-carboxylate synthase of Corynebacterium diphtheriae (strain ATCC 700971 / NCTC 13129 / Biotype gravis).